Reading from the N-terminus, the 565-residue chain is Phosphomethylpyrimidine synthase (565 aa).

Substrate-binding positions include N201, M230, Y259, H295, 315–317 (SRG), 356–359 (DGLR), and E395. H399 serves as a coordination point for Zn(2+). Residue Y422 participates in substrate binding. H463 serves as a coordination point for Zn(2+). [4Fe-4S] cluster-binding residues include C543, C546, and C551.

Belongs to the ThiC family. Homodimer. [4Fe-4S] cluster serves as cofactor.

It carries out the reaction 5-amino-1-(5-phospho-beta-D-ribosyl)imidazole + S-adenosyl-L-methionine = 4-amino-2-methyl-5-(phosphooxymethyl)pyrimidine + CO + 5'-deoxyadenosine + formate + L-methionine + 3 H(+). The protein operates within cofactor biosynthesis; thiamine diphosphate biosynthesis. Catalyzes the synthesis of the hydroxymethylpyrimidine phosphate (HMP-P) moiety of thiamine from aminoimidazole ribotide (AIR) in a radical S-adenosyl-L-methionine (SAM)-dependent reaction. This is Phosphomethylpyrimidine synthase from Ehrlichia canis (strain Jake).